The sequence spans 416 residues: MSLVAIGINHKTATVDLREKVAFAPDKIHEAMKSLASRTKTGEAVIVSTCNRTELYCNTGDEADVISWLESYHQLSHDDVLPCLYKYQGQQVVQHLMRVSSGLDSLILGEPQILGQVKQSFVKAKEAGTVAVTMDRLFQNTFSVAKKVRTETEIGAAAVSVAFAAVSMAKHIFSALSATKVLLIGAGETIELVARHLKDNGVDSMIVANRTISRAEAMCEEFGATAITLEQIPDFLPKADIVISSTASPLPILGKGMVEKALKQRRHQPMLLVDIAVPRDIEAEVADLDDAFLYTVDDLQSIIEQNMASRREAAEKAELIVEEESHHFMEWIRSLESVDSIREYRSQSMAIRDELVERAINKLAQGGDSEQLILELANKLTNKLIHAPTQALTQASRRGDLNSLGQLRAALGLDKD.

Substrate contacts are provided by residues 49 to 52, serine 105, 110 to 112, and glutamine 116; these read TCNR and EPQ. The active-site Nucleophile is cysteine 50. 185–190 contacts NADP(+); the sequence is GAGETI.

This sequence belongs to the glutamyl-tRNA reductase family. Homodimer.

The enzyme catalyses (S)-4-amino-5-oxopentanoate + tRNA(Glu) + NADP(+) = L-glutamyl-tRNA(Glu) + NADPH + H(+). Its pathway is porphyrin-containing compound metabolism; protoporphyrin-IX biosynthesis; 5-aminolevulinate from L-glutamyl-tRNA(Glu): step 1/2. Catalyzes the NADPH-dependent reduction of glutamyl-tRNA(Glu) to glutamate 1-semialdehyde (GSA). This Shewanella loihica (strain ATCC BAA-1088 / PV-4) protein is Glutamyl-tRNA reductase.